The primary structure comprises 138 residues: Small ribosomal subunit protein uS11 (138 aa).

Positions 1-12 (MAKQSAKGSTTT) are enriched in polar residues. Residues 1–37 (MAKQSAKGSTTTKRQRGKRREKKNVPRGQAHIQSTFN) are disordered. Positions 13–22 (KRQRGKRREK) are enriched in basic residues.

This sequence belongs to the universal ribosomal protein uS11 family. As to quaternary structure, part of the 30S ribosomal subunit. Interacts with proteins S7 and S18. Binds to IF-3.

Its function is as follows. Located on the platform of the 30S subunit, it bridges several disparate RNA helices of the 16S rRNA. Forms part of the Shine-Dalgarno cleft in the 70S ribosome. The sequence is that of Small ribosomal subunit protein uS11 from Roseiflexus castenholzii (strain DSM 13941 / HLO8).